The sequence spans 154 residues: Putative glutamine amidotransferase-like protein RP712 (154 aa).

Positions 1 to 94 (MSIEKEKFWA…QQSVWSFHNK (94 aa)) constitute a Glutamine amidotransferase type-1 domain.

In Rickettsia prowazekii (strain Madrid E), this protein is Putative glutamine amidotransferase-like protein RP712.